We begin with the raw amino-acid sequence, 140 residues long: 5-NmdU N-acetyltransferase (140 aa).

Residues 2–140 form the N-acetyltransferase domain; it reads IVVRKALPEE…GEGLALFKEW (139 aa).

This sequence belongs to the acetyltransferase family.

It catalyses the reaction 5-aminomethyl-dUMP in DNA + acetyl-CoA = 5-acetylaminomethyl-dUMP in DNA + CoA + H(+). Its function is as follows. Acetylates 5-aminomethyl-2'-deoxyuridine (5-NmdU) to produce 5-acetylaminomethyl-2'-deoxyuridine (5-AcNmdU) on DNA as a step in the pathway leading to thymidine hypermodifications in the viral genome. As a final result of the pathway of hypermodification, 5-acetylaminomethyl-2'-deoxyuridine (5-AcNmdU) substitutes for a subset of thymidines in the viral DNA. These modifications probably prevent degradation of viral genome by the host restriction-modification antiviral defense system. The sequence is that of 5-NmdU N-acetyltransferase from Pseudomonas aeruginosa.